Here is a 188-residue protein sequence, read N- to C-terminus: UPF0340 protein GK3370 (188 aa).

Belongs to the UPF0340 family.

This Geobacillus kaustophilus (strain HTA426) protein is UPF0340 protein GK3370.